Reading from the N-terminus, the 287-residue chain is Prepilin leader peptidase/N-methyltransferase (287 aa).

The next 6 helical transmembrane spans lie at 10 to 30 (LGFP…NVVI), 101 to 121 (ISIQ…ASVW), 125 to 145 (FGWQ…MSGI), 177 to 197 (KPAL…WWLF), 226 to 246 (ILPI…IWLF), and 253 to 273 (ATPI…FFWG).

The protein belongs to the peptidase A24 family.

Its subcellular location is the cell inner membrane. The catalysed reaction is Typically cleaves a -Gly-|-Phe- bond to release an N-terminal, basic peptide of 5-8 residues from type IV prepilin, and then N-methylates the new N-terminal amino group, the methyl donor being S-adenosyl-L-methionine.. Functionally, plays an essential role in type IV pili and type II pseudopili formation by proteolytically removing the leader sequence from substrate proteins and subsequently monomethylating the alpha-amino group of the newly exposed N-terminal phenylalanine. This chain is Prepilin leader peptidase/N-methyltransferase (xpsO), found in Xanthomonas campestris pv. campestris (strain ATCC 33913 / DSM 3586 / NCPPB 528 / LMG 568 / P 25).